A 709-amino-acid chain; its full sequence is Polyribonucleotide nucleotidyltransferase (709 aa).

Residues aspartate 486 and aspartate 492 each coordinate Mg(2+). Residues 553 to 612 (PRIHTIKINADKIKDVIGKGGSVIRALTEETGTTIEIEDDGTVKIAATSGEQAKQAIARI) enclose the KH domain. Residues 622-690 (GRIYNGKVTR…RQGRIRLSMK (69 aa)) enclose the S1 motif domain. The disordered stretch occupies residues 690-709 (KEAQATQQEAAETSSEDPAN). A compositionally biased stretch (low complexity) spans 691-702 (EAQATQQEAAET).

It belongs to the polyribonucleotide nucleotidyltransferase family. In terms of assembly, component of the RNA degradosome, which is a multiprotein complex involved in RNA processing and mRNA degradation. Mg(2+) is required as a cofactor.

The protein localises to the cytoplasm. It catalyses the reaction RNA(n+1) + phosphate = RNA(n) + a ribonucleoside 5'-diphosphate. Its function is as follows. Involved in mRNA degradation. Catalyzes the phosphorolysis of single-stranded polyribonucleotides processively in the 3'- to 5'-direction. The chain is Polyribonucleotide nucleotidyltransferase from Proteus mirabilis (strain HI4320).